Here is a 260-residue protein sequence, read N- to C-terminus: Adenosylcobinamide-GDP ribazoletransferase (260 aa).

8 helical membrane-spanning segments follow: residues 3–23, 36–56, 60–80, 108–128, 133–153, 180–200, 206–226, and 239–259; these read APLWLRDLAGAWIFYSVLPAW, FAPWIGLVLGGLQSFLWLVLI, WPTSAVALLVIGLGAWLSGGL, VGASGVQALLVVVLLQIAALL, LAPLALLIAAFWGRCAPLWAM, ALPAFLVLLLALTVVPLLMIV, MVLMAGIGVGVLPAFLVPELL, and GASVVLVETITLLLLAVLLTA.

Belongs to the CobS family. It depends on Mg(2+) as a cofactor.

It localises to the cell inner membrane. The enzyme catalyses alpha-ribazole + adenosylcob(III)inamide-GDP = adenosylcob(III)alamin + GMP + H(+). It catalyses the reaction alpha-ribazole 5'-phosphate + adenosylcob(III)inamide-GDP = adenosylcob(III)alamin 5'-phosphate + GMP + H(+). Its pathway is cofactor biosynthesis; adenosylcobalamin biosynthesis; adenosylcobalamin from cob(II)yrinate a,c-diamide: step 7/7. Joins adenosylcobinamide-GDP and alpha-ribazole to generate adenosylcobalamin (Ado-cobalamin). Also synthesizes adenosylcobalamin 5'-phosphate from adenosylcobinamide-GDP and alpha-ribazole 5'-phosphate. This Prochlorococcus marinus (strain MIT 9303) protein is Adenosylcobinamide-GDP ribazoletransferase.